A 378-amino-acid chain; its full sequence is Glutamate 5-kinase (378 aa).

An ATP-binding site is contributed by K20. Positions 60, 147, and 159 each coordinate substrate. ATP-binding positions include 179-180 (TD) and 221-227 (TGGMLTK). Residues 286–364 (RGRVVLDDGA…SQIARILGSM (79 aa)) form the PUA domain.

Belongs to the glutamate 5-kinase family.

Its subcellular location is the cytoplasm. The enzyme catalyses L-glutamate + ATP = L-glutamyl 5-phosphate + ADP. Its pathway is amino-acid biosynthesis; L-proline biosynthesis; L-glutamate 5-semialdehyde from L-glutamate: step 1/2. Functionally, catalyzes the transfer of a phosphate group to glutamate to form L-glutamate 5-phosphate. This is Glutamate 5-kinase from Bordetella pertussis (strain Tohama I / ATCC BAA-589 / NCTC 13251).